The chain runs to 315 residues: Methionyl-tRNA formyltransferase (315 aa).

113-116 is a (6S)-5,6,7,8-tetrahydrofolate binding site; the sequence is SLLP.

Belongs to the Fmt family.

It catalyses the reaction L-methionyl-tRNA(fMet) + (6R)-10-formyltetrahydrofolate = N-formyl-L-methionyl-tRNA(fMet) + (6S)-5,6,7,8-tetrahydrofolate + H(+). Functionally, attaches a formyl group to the free amino group of methionyl-tRNA(fMet). The formyl group appears to play a dual role in the initiator identity of N-formylmethionyl-tRNA by promoting its recognition by IF2 and preventing the misappropriation of this tRNA by the elongation apparatus. The sequence is that of Methionyl-tRNA formyltransferase from Salmonella enteritidis PT4 (strain P125109).